Reading from the N-terminus, the 387-residue chain is Exodeoxyribonuclease 7 large subunit (387 aa).

Belongs to the XseA family. As to quaternary structure, heterooligomer composed of large and small subunits.

It localises to the cytoplasm. The catalysed reaction is Exonucleolytic cleavage in either 5'- to 3'- or 3'- to 5'-direction to yield nucleoside 5'-phosphates.. In terms of biological role, bidirectionally degrades single-stranded DNA into large acid-insoluble oligonucleotides, which are then degraded further into small acid-soluble oligonucleotides. This Campylobacter jejuni subsp. doylei (strain ATCC BAA-1458 / RM4099 / 269.97) protein is Exodeoxyribonuclease 7 large subunit.